The following is a 127-amino-acid chain: Ribosome-binding factor A (127 aa).

It belongs to the RbfA family. Monomer. Binds 30S ribosomal subunits, but not 50S ribosomal subunits or 70S ribosomes.

It localises to the cytoplasm. Functionally, one of several proteins that assist in the late maturation steps of the functional core of the 30S ribosomal subunit. Associates with free 30S ribosomal subunits (but not with 30S subunits that are part of 70S ribosomes or polysomes). Required for efficient processing of 16S rRNA. May interact with the 5'-terminal helix region of 16S rRNA. This Actinobacillus pleuropneumoniae serotype 7 (strain AP76) protein is Ribosome-binding factor A.